The following is a 292-amino-acid chain: VGLAKGLRKVGTIYPLVVAVLPDVPPEHRRILVEQGCVVREIEPVYPPENHTEFAMAYYVINYSKLRIWEFVEYSKMIYLDGDIQVFENIDHLFDLENGYFYAVMDCFCEKTWSHTPQYQIGYCQQSPKRVHWPKQLGPKPPLYFNAGMFVYEPSLPTYHDLLHTLKITPPTPFAEQDFLNMFLRDVYRPIPNVYNLVLAMLWRHPENVNLEAVKVVHYCAAGSKPWRYTGEEENMDRNDIKMLVNKWRDIYDDEMLDYNAVADPAADGLQLTAVLTEAAGVVRFIPAPSAA.

Residue lysine 65 is part of the active site. Positions 81, 83, and 218 each coordinate Mn(2+).

This sequence belongs to the glycosyltransferase 8 family. Galactosyltransferase subfamily. A divalent metal cation is required as a cofactor. Present in phloem-associated intermediary cells. Weakly expressed in leaves.

The protein localises to the cytoplasm. The catalysed reaction is myo-inositol + UDP-alpha-D-galactose = alpha-D-galactosyl-(1-&gt;3)-1D-myo-inositol + UDP + H(+). Its function is as follows. May promote plant stress tolerance. Galactinol synthase mainly involved in the biosynthesis of transport raffinose family oligosaccharides (RFOs) that function as osmoprotectants. This is Galactinol synthase 2 (GOLS2) from Ajuga reptans (Bugle).